Reading from the N-terminus, the 99-residue chain is Duplicate procyclin (99 aa).

The chain is Duplicate procyclin from Trypanosoma brucei brucei.